The following is a 274-amino-acid chain: CTO1 family protein C17G9.12c (274 aa).

It belongs to the CTO1 family.

It is found in the cytoplasm. The protein resides in the nucleus. The protein is CTO1 family protein C17G9.12c of Schizosaccharomyces pombe (strain 972 / ATCC 24843) (Fission yeast).